The primary structure comprises 326 residues: Glyoxylate/hydroxypyruvate reductase B (326 aa).

Residues Arg-237 and Glu-266 contribute to the active site. His-285 serves as the catalytic Proton donor.

The protein belongs to the D-isomer specific 2-hydroxyacid dehydrogenase family. GhrB subfamily. Homodimer.

It is found in the cytoplasm. The enzyme catalyses glycolate + NADP(+) = glyoxylate + NADPH + H(+). The catalysed reaction is (R)-glycerate + NAD(+) = 3-hydroxypyruvate + NADH + H(+). It carries out the reaction (R)-glycerate + NADP(+) = 3-hydroxypyruvate + NADPH + H(+). Its function is as follows. Catalyzes the NADPH-dependent reduction of glyoxylate and hydroxypyruvate into glycolate and glycerate, respectively. This is Glyoxylate/hydroxypyruvate reductase B from Yersinia pseudotuberculosis serotype O:3 (strain YPIII).